We begin with the raw amino-acid sequence, 413 residues long: Histidine--tRNA ligase (413 aa).

Belongs to the class-II aminoacyl-tRNA synthetase family. As to quaternary structure, homodimer.

The protein resides in the cytoplasm. It catalyses the reaction tRNA(His) + L-histidine + ATP = L-histidyl-tRNA(His) + AMP + diphosphate + H(+). The polypeptide is Histidine--tRNA ligase (Geobacter metallireducens (strain ATCC 53774 / DSM 7210 / GS-15)).